A 487-amino-acid chain; its full sequence is NADH-quinone oxidoreductase subunit N (487 aa).

The next 14 membrane-spanning stretches (helical) occupy residues 8-28, 35-55, 78-98, 104-124, 125-145, 159-179, 203-223, 235-255, 271-291, 297-317, 328-348, 376-396, 409-428, and 451-471; these read LIAM…MLSI, FINA…LYFV, GLVI…LVGY, EFYL…SANH, LASL…LIGY, YMLL…LLYA, ILAG…LVPF, PAPV…AVVM, LVLS…AISQ, LLGY…VAVQ, IGVY…VVSL, AVMT…GFIG, LWWL…YYYL, and ALTA…VLGI.

It belongs to the complex I subunit 2 family. As to quaternary structure, NDH-1 is composed of 13 different subunits. Subunits NuoA, H, J, K, L, M, N constitute the membrane sector of the complex.

The protein resides in the cell inner membrane. It carries out the reaction a quinone + NADH + 5 H(+)(in) = a quinol + NAD(+) + 4 H(+)(out). NDH-1 shuttles electrons from NADH, via FMN and iron-sulfur (Fe-S) centers, to quinones in the respiratory chain. The immediate electron acceptor for the enzyme in this species is believed to be ubiquinone. Couples the redox reaction to proton translocation (for every two electrons transferred, four hydrogen ions are translocated across the cytoplasmic membrane), and thus conserves the redox energy in a proton gradient. This Yersinia pseudotuberculosis serotype O:1b (strain IP 31758) protein is NADH-quinone oxidoreductase subunit N.